A 423-amino-acid polypeptide reads, in one-letter code: Structure-specific endonuclease subunit SLX1 (423 aa).

Residues 23 to 105 (AFYCCYLLRS…QNTKVSRHAD (83 aa)) enclose the GIY-YIG domain. Disordered stretches follow at residues 300 to 334 (RRRR…DALQ) and 365 to 406 (AHRP…LGLQ).

The protein belongs to the SLX1 family. In terms of assembly, forms a heterodimer with SLX4. A divalent metal cation serves as cofactor.

The protein resides in the nucleus. Functionally, catalytic subunit of the SLX1-SLX4 structure-specific endonuclease that resolves DNA secondary structures generated during DNA repair and recombination. Has endonuclease activity towards branched DNA substrates, introducing single-strand cuts in duplex DNA close to junctions with ss-DNA. The chain is Structure-specific endonuclease subunit SLX1 from Paracoccidioides brasiliensis (strain Pb03).